The primary structure comprises 541 residues: EH domain-containing protein 4 (541 aa).

Met-1 is subject to N-acetylmethionine. The Dynamin-type G domain maps to 58–289 (FENKPMILLV…DLFRDIQSLP (232 aa)). Residues 68–75 (GQYSTGKT) form a G1 motif region. 68–75 (GQYSTGKT) contacts ATP. Positions 94–95 (EP) are G2 motif. Positions 156-159 (DSPG) are G3 motif. A Phosphoserine modification is found at Ser-162. Positions 222 to 225 (NKAD) are G4 motif. Residue Lys-223 coordinates ATP. A region of interest (G5 motif) is located at residue Val-246. Trp-261 serves as a coordination point for ATP. The 89-residue stretch at 447–535 (DKPVYDELFY…PHLVPPSHRK (89 aa)) folds into the EH domain. A Phosphotyrosine modification is found at Tyr-451. Position 459 is a phosphoserine (Ser-459). The region spanning 479 to 514 (LPNSVLGKIWKLADCDCDGMLDEEEFALAKHLIKIK) is the EF-hand domain. 5 residues coordinate Ca(2+): Asp-492, Asp-494, Asp-496, Met-498, and Glu-503.

This sequence belongs to the TRAFAC class dynamin-like GTPase superfamily. Dynamin/Fzo/YdjA family. EHD subfamily. Homooligomer, and heterooligomer with EHD1, EHD2 and EHD3. Forms a complex with EHD4 and MICALL1; the complex controls CDH5 trafficking and coordinates angiogenesis. In terms of tissue distribution, highly expressed in pancreas and heart.

It is found in the early endosome membrane. Its subcellular location is the recycling endosome membrane. It localises to the cell membrane. The protein resides in the cell junction. The protein localises to the adherens junction. Functionally, ATP- and membrane-binding protein that probably controls membrane reorganization/tubulation upon ATP hydrolysis. Plays a role in early endosomal transport. During sprouting angiogenesis, in complex with PACSIN2 and MICALL1, forms recycling endosome-like tubular structure at asymmetric adherens junctions to control CDH5 trafficking. This chain is EH domain-containing protein 4, found in Homo sapiens (Human).